Reading from the N-terminus, the 102-residue chain is Large ribosomal subunit protein bL21 (102 aa).

Belongs to the bacterial ribosomal protein bL21 family. As to quaternary structure, part of the 50S ribosomal subunit. Contacts protein L20.

In terms of biological role, this protein binds to 23S rRNA in the presence of protein L20. The polypeptide is Large ribosomal subunit protein bL21 (Marinomonas sp. (strain MWYL1)).